The following is a 695-amino-acid chain: MIITFPGSPYKLNQAFQPAGDQPEAIRILVEGIESGLSFQTLLGVTGSGKTFTIANMIARLGRPAIIMAPNKTLAAQLYAEMREFFPENAVEYFVSYYDYYQPEAYVPSRDLFIEKDSSINEHIEQMRLSATKSLLEREDAIIVATVSCIYGIGDPVDYHGMILHVREHEKISQRDIIQRLTGMQYQRNEFEFARGTFRVRGDVLDVFPAENSETALRISLFDDEVESMTLFDPLTGQTRQKVSRYTVYPSSHYVTPRSTTLRAIETIKTELTGRLNYFHENHKLVEAQRLEQRTRFDLEMLNELGFCKGIENYSRHLSGRQPGDPPPTLIDYLPDNALMIIDESHVTVPQIGGMYKGDRSRKENLVAYGFRLPSALDNRPLRFEEFEKLMPQTIFVSATPADYEIQRSGQIAEQVVRPTGLVDPVIIIRPVTTQVDDLMSEVSLRAAQNERVLVTTLTKRMAEDLTDYFSDHGIRVRYLHSDIDTVERVEIIRDLRLGKFDVLVGINLLREGLDIPEVSLVGILDADKEGFLRSERSLIQTMGRAARHVNGTVILYADKITNSMRRAIDETERRRNKQKLFNQQNNITPRGVNKRIKDLIDGVYDSENAAEHRKVAQIQARYAAMDEAQLAKEIQRLEKSMLEAARNMEFEQAAQYRDEIKNLRSKLFIGIIDPDEIREVPQTAGKKSRRKAGR.

Residues 31 to 414 form the Helicase ATP-binding domain; that stretch reads EGIESGLSFQ…EIQRSGQIAE (384 aa). 44–51 is an ATP binding site; that stretch reads GVTGSGKT. The short motif at 97 to 120 is the Beta-hairpin element; the sequence is YYDYYQPEAYVPSRDLFIEKDSSI. The 167-residue stretch at 435-601 folds into the Helicase C-terminal domain; sequence QVDDLMSEVS…GVNKRIKDLI (167 aa). Positions 632 to 667 constitute a UVR domain; that stretch reads AKEIQRLEKSMLEAARNMEFEQAAQYRDEIKNLRSK.

It belongs to the UvrB family. In terms of assembly, forms a heterotetramer with UvrA during the search for lesions. Interacts with UvrC in an incision complex.

It is found in the cytoplasm. Its function is as follows. The UvrABC repair system catalyzes the recognition and processing of DNA lesions. A damage recognition complex composed of 2 UvrA and 2 UvrB subunits scans DNA for abnormalities. Upon binding of the UvrA(2)B(2) complex to a putative damaged site, the DNA wraps around one UvrB monomer. DNA wrap is dependent on ATP binding by UvrB and probably causes local melting of the DNA helix, facilitating insertion of UvrB beta-hairpin between the DNA strands. Then UvrB probes one DNA strand for the presence of a lesion. If a lesion is found the UvrA subunits dissociate and the UvrB-DNA preincision complex is formed. This complex is subsequently bound by UvrC and the second UvrB is released. If no lesion is found, the DNA wraps around the other UvrB subunit that will check the other stand for damage. This chain is UvrABC system protein B, found in Nitrosomonas europaea (strain ATCC 19718 / CIP 103999 / KCTC 2705 / NBRC 14298).